Reading from the N-terminus, the 428-residue chain is 3-phosphoshikimate 1-carboxyvinyltransferase (428 aa).

3-phosphoshikimate-binding residues include Lys23, Ser24, and Arg28. Residue Lys23 participates in phosphoenolpyruvate binding. Phosphoenolpyruvate-binding residues include Gly97 and Arg125. 3-phosphoshikimate-binding residues include Ser170, Ser171, Gln172, Ser198, Asp314, Asn337, and Lys341. Residue Gln172 participates in phosphoenolpyruvate binding. Catalysis depends on Asp314, which acts as the Proton acceptor. 3 residues coordinate phosphoenolpyruvate: Arg345, Arg387, and Lys412.

The protein belongs to the EPSP synthase family. As to quaternary structure, monomer.

Its subcellular location is the cytoplasm. It carries out the reaction 3-phosphoshikimate + phosphoenolpyruvate = 5-O-(1-carboxyvinyl)-3-phosphoshikimate + phosphate. It participates in metabolic intermediate biosynthesis; chorismate biosynthesis; chorismate from D-erythrose 4-phosphate and phosphoenolpyruvate: step 6/7. In terms of biological role, catalyzes the transfer of the enolpyruvyl moiety of phosphoenolpyruvate (PEP) to the 5-hydroxyl of shikimate-3-phosphate (S3P) to produce enolpyruvyl shikimate-3-phosphate and inorganic phosphate. In Erwinia tasmaniensis (strain DSM 17950 / CFBP 7177 / CIP 109463 / NCPPB 4357 / Et1/99), this protein is 3-phosphoshikimate 1-carboxyvinyltransferase.